The sequence spans 1942 residues: Probable helicase with zinc finger domain (1942 aa).

Residues 178–206 (SEEYTLCKRFLEQGICRYGAQCTSAHSQE) form a C3H1-type zinc finger. The residue at position 248 (Ser248) is a Phosphoserine. 668–675 (GPYGTGKT) lines the ATP pocket. Residues 794–797 (DEAA) carry the DEAA box motif. Polar residues predominate over residues 1117–1127 (SGSTNKQQQSP). The interval 1117-1141 (SGSTNKQQQSPPKGKSLHHTQNDHF) is disordered. Thr1163 is subject to Phosphothreonine. The residue at position 1245 (Arg1245) is an Omega-N-methylarginine. 4 disordered regions span residues 1246-1345 (GSPI…INLP), 1386-1429 (NLPE…GPNN), 1527-1552 (QGSAPYPHHHHPHLQHLPQPPLGLHQ), and 1608-1637 (RQVQSRSPPAVPSPPSSTDHSSHFSNFNDN). Composition is skewed to basic and acidic residues over residues 1268–1281 (HQEKDQHEQNRNGK) and 1292–1308 (NKIRTPEKKPTEPKQVD). Positions 1399–1412 (NQVVQQQSQLNQQP) are enriched in low complexity. Ser1614 is modified (phosphoserine). The span at 1623 to 1636 (SSTDHSSHFSNFND) shows a compositional bias: low complexity. 4 positions are modified to phosphoserine: Ser1645, Ser1738, Ser1741, and Ser1766. Disordered stretches follow at residues 1729–1779 (FHPL…TPQD), 1792–1843 (NQSS…PEDQ), and 1870–1942 (MPNK…SYFK). Over residues 1731 to 1745 (PLSSRTVSSSSLPSL) the composition is skewed to low complexity. 2 stretches are compositionally biased toward polar residues: residues 1761–1779 (RISSSSVQPCSEEVSTPQD) and 1792–1825 (NQSSFNFSSPESWVNTTSSTPYQNIPCNGSSRTA). Composition is skewed to low complexity over residues 1876 to 1888 (AESANSSSPQSSA) and 1920 to 1942 (LSLFQELSLGSSSGSNGFYSYFK).

Belongs to the DNA2/NAM7 helicase family. As to quaternary structure, interacts with SMYD2. Interacts with POLR2A. Interacts with SMYD3; the interaction may bridge SMYD3 and RNA polymerase II. As to expression, expressed predominantly in thymus and brain. Expression is down-regulated in 28 of 95 tested cancer cell lines.

Its subcellular location is the nucleus. Functionally, may act as a helicase that plays a role in RNA metabolism in multiple tissues and organs within the developing embryo. This Homo sapiens (Human) protein is Probable helicase with zinc finger domain (HELZ).